The following is a 112-amino-acid chain: Ribosome-binding factor A (112 aa).

It belongs to the RbfA family. Monomer. Binds 30S ribosomal subunits, but not 50S ribosomal subunits or 70S ribosomes.

The protein resides in the cytoplasm. In terms of biological role, one of several proteins that assist in the late maturation steps of the functional core of the 30S ribosomal subunit. Associates with free 30S ribosomal subunits (but not with 30S subunits that are part of 70S ribosomes or polysomes). Required for efficient processing of 16S rRNA. May interact with the 5'-terminal helix region of 16S rRNA. The chain is Ribosome-binding factor A from Mycoplasma genitalium (strain ATCC 33530 / DSM 19775 / NCTC 10195 / G37) (Mycoplasmoides genitalium).